Consider the following 2475-residue polypeptide: Polyprotein pp220 (2475 aa).

G2 carries N-myristoyl glycine; by host lipidation. Positions 2184 to 2211 (RNQIIGELNAFRTQLEDTRREVNNLIQT) form a coiled coil.

Belongs to the asfivirus polyprotein pp220 family. In terms of processing, specific enzymatic cleavages in vivo by the viral pS273R protease yield mature proteins.

Its subcellular location is the host cytoplasm. The protein resides in the host perinuclear region. It localises to the virion. It is found in the host nucleus. Functionally, essential for the core assembly. Its myristoyl moiety may function as a membrane-anchoring signal to bind the developing core shell to the inner viral envelope. Its function is as follows. The structural protein p34 is a component of the virus core shell. The structural protein p14 is a component of the virus core shell. In terms of biological role, the structural protein p37 is a component of the virus core shell. Functionally, the structural protein p150 is a component of the virus core shell. This African swine fever virus (isolate Tick/South Africa/Pretoriuskop Pr4/1996) (ASFV) protein is Polyprotein pp220.